We begin with the raw amino-acid sequence, 289 residues long: Ribosomal protein L11 methyltransferase (289 aa).

Residues threonine 142, glycine 163, aspartate 185, and asparagine 226 each coordinate S-adenosyl-L-methionine.

It belongs to the methyltransferase superfamily. PrmA family.

Its subcellular location is the cytoplasm. It catalyses the reaction L-lysyl-[protein] + 3 S-adenosyl-L-methionine = N(6),N(6),N(6)-trimethyl-L-lysyl-[protein] + 3 S-adenosyl-L-homocysteine + 3 H(+). Its function is as follows. Methylates ribosomal protein L11. This is Ribosomal protein L11 methyltransferase from Legionella pneumophila (strain Lens).